Consider the following 632-residue polypeptide: RNA-binding post-transcriptional regulator csx1 (632 aa).

Phosphoserine; by MAPK sty1 occurs at positions 42 and 54. Residues Ser-67 and Ser-69 each carry the phosphoserine modification. 2 RRM domains span residues 85 to 167 (DTLW…WATG) and 182 to 261 (FSIF…VASP). At Ser-291 the chain carries Phosphoserine; by MAPK sty1. In terms of domain architecture, RRM 3 spans 297–369 (TTVFVGGLAS…SHIRLAWGHN (73 aa)). A Phosphoserine; by MAPK sty1 modification is found at Ser-455. Positions 456 to 476 (PPPLSRSASISPTLSGSGSGL) are disordered. The span at 466 to 476 (SPTLSGSGSGL) shows a compositional bias: low complexity.

As to quaternary structure, interacts with cip1 and cip2.

Its subcellular location is the cytoplasm. In terms of biological role, regulates global gene expression after oxidative stress. Interacts and stabilizes atf1 and pcr1 mRNAs after oxidative stress, thus controlling their turnover. In Schizosaccharomyces pombe (strain 972 / ATCC 24843) (Fission yeast), this protein is RNA-binding post-transcriptional regulator csx1 (csx1).